Here is a 104-residue protein sequence, read N- to C-terminus: Protein RnfH (104 aa).

The protein belongs to the UPF0125 (RnfH) family.

The sequence is that of Protein RnfH from Pseudomonas syringae pv. syringae (strain B728a).